The following is a 119-amino-acid chain: Fluoride-specific ion channel FluC (119 aa).

Transmembrane regions (helical) follow at residues 5-25 (IIPL…LNLA), 30-50 (IPPA…IGIF), 59-79 (WKLL…GFSL), and 97-117 (IFLH…IGAA). 2 residues coordinate Na(+): Gly69 and Thr72.

Belongs to the fluoride channel Fluc/FEX (TC 1.A.43) family.

The protein resides in the cell inner membrane. The enzyme catalyses fluoride(in) = fluoride(out). With respect to regulation, na(+) is not transported, but it plays an essential structural role and its presence is essential for fluoride channel function. Functionally, fluoride-specific ion channel. Important for reducing fluoride concentration in the cell, thus reducing its toxicity. The chain is Fluoride-specific ion channel FluC from Neisseria meningitidis serogroup B (strain ATCC BAA-335 / MC58).